Here is a 114-residue protein sequence, read N- to C-terminus: UPF0342 protein NT01CX_2274 (114 aa).

Belongs to the UPF0342 family.

The chain is UPF0342 protein NT01CX_2274 from Clostridium novyi (strain NT).